The primary structure comprises 456 residues: 1,3-beta-glucanosyltransferase gas4 (456 aa).

The signal sequence occupies residues 1 to 25 (MGVANIIYALFLLGPSIFLKATAQT). Cysteine 68 and cysteine 97 are disulfide-bonded. Positions 86, 156, 157, 197, and 202 each coordinate (1,3-beta-D-glucosyl)n. The active-site Proton donor is the glutamate 157. 2 disulfides stabilise this stretch: cysteine 211-cysteine 350 and cysteine 229-cysteine 260. Asparagine 248 is a glycosylation site (N-linked (GlcNAc...) asparagine). Catalysis depends on glutamate 257, which acts as the Nucleophile. Tyrosine 296 provides a ligand contact to (1,3-beta-D-glucosyl)n. Disordered stretches follow at residues 334–353 (NPKG…CPAN) and 384–434 (IEGP…ESGS). N-linked (GlcNAc...) asparagine glycosylation is found at asparagine 353 and asparagine 415. Positions 417-434 (TSTTSYTSGMTSSSESGS) are enriched in low complexity. A lipid anchor (GPI-anchor amidated serine) is attached at serine 432. The propeptide at 433 to 456 (GSSKIGVAFCQALFITVLIATLSF) is removed in mature form.

The protein belongs to the glycosyl hydrolase 72 family.

The protein resides in the cell membrane. In terms of biological role, splits internally a 1,3-beta-glucan molecule and transfers the newly generated reducing end (the donor) to the non-reducing end of another 1,3-beta-glucan molecule (the acceptor) forming a 1,3-beta linkage, resulting in the elongation of 1,3-beta-glucan chains in the cell wall. Involved in spore wall assembly. The protein is 1,3-beta-glucanosyltransferase gas4 (gas4) of Schizosaccharomyces pombe (strain 972 / ATCC 24843) (Fission yeast).